A 725-amino-acid polypeptide reads, in one-letter code: Homeobox protein unc-62 (725 aa).

Residues 133–218 (SSDVCSSASF…PLDIVGDERA (86 aa)) form the MEIS N-terminal domain. Disordered regions lie at residues 214–258 (GDER…PYEP), 295–317 (SSSSSQPQPGDHPLANGGTLHST), 329–359 (VSSPSTCSSGGLRQDSTPLSGETPMANGNSM), 386–419 (SLHQHHLHHPHHFPHHQLQPPAHHQDFLLPPPPQ), 491–555 (VKME…KRKV), and 615–661 (IDQN…PDPT). Residues 219–239 (SSSQPPMSPGSMGHHGHSGSP) show a composition bias toward low complexity. Residues 388-400 (HQHHLHHPHHFPH) show a composition bias toward basic residues. The segment covering 498 to 508 (SVSSSKSGGKK) has biased composition (low complexity). Positions 541–550 (LSDSANGSQN) are enriched in polar residues. Positions 552 to 614 (KRKVPKVFSK…NARRRIVQPM (63 aa)) form a DNA-binding region, homeobox; TALE-type.

This sequence belongs to the TALE/MEIS homeobox family.

It is found in the nucleus. In terms of biological role, acts redundantly with ceh-20 and ceh-40 to perform overlapping roles during embryogenesis. Required for postembryonic development of the ectoderm, including the Q, V and P cell lineages, playing a crucial role in ensuring that these cells and their descendants undergo their invariant patterns of cell division, migration, fusion and morphogenesis. Has a role in the mig-13 pathway to promote anterior migration of neuroblasts in the Q lineage. Required for multiple roles in regulating vulva development. The sequence is that of Homeobox protein unc-62 (unc-62) from Caenorhabditis briggsae.